The chain runs to 576 residues: MFYNFISKDSILYRLILCFGIGIGTVFGLSPFSFFSAGVFASISCIFLFFSLNRTSIWKAFLWLLILSQILNFTAFYWIPGAISRISGVNTFVSILFFFLYGLISHLKFFLFYTLFRFSKIDSASKTYILLIFPAAGTLSDMITFQIFPWYWGNLISGSIVFEQFASICGVYGLSFLLLFISSTFLILVNYYKYKNSKEFKTSIASLICITFIYGFGLYRIGYINQSQNELKPKNLSVLMIQPDTSPGTKDLKADASYLSATMSKVFSLAIPTFENSPSLIVIPESAIPFHGTIDSEENRKEKIYSSTMEGIILYLSKHTGADVLFNELNLDENKLRNQVSLFKNLDGKTERYNKRRLLPFGEYLPMEKNFPFLRSIFQETSRYVPGEFPKLLIGNKIQNQRSFLPPEISKLNEPKTYRYEFSSIVEHTNKIRNLEYSYSILPLLCYEAMFTELVLDYFQNEQKPEVLINITNDSWFDSELEAYQHSGAVRLRAIETGLPLIRSAVSGISEVWDARGIPMIVPIGFHETGTRAFSIRLDAIESTIYTRFGNSFLWIFCILILISRLIFVSRIERKS.

7 consecutive transmembrane segments (helical) span residues Leu-15–Phe-35, Gly-38–Trp-58, Ala-60–Pro-80, Phe-92–Phe-112, Tyr-128–Phe-148, Ile-168–Leu-188, and Ile-204–Ile-224. The CN hydrolase domain occupies Leu-236–Leu-538. Glu-285 acts as the Proton acceptor in catalysis. The active site involves Lys-355. The Nucleophile role is filled by Cys-446. A helical membrane pass occupies residues Phe-549–Val-569.

It belongs to the CN hydrolase family. Apolipoprotein N-acyltransferase subfamily.

The protein resides in the cell inner membrane. It catalyses the reaction N-terminal S-1,2-diacyl-sn-glyceryl-L-cysteinyl-[lipoprotein] + a glycerophospholipid = N-acyl-S-1,2-diacyl-sn-glyceryl-L-cysteinyl-[lipoprotein] + a 2-acyl-sn-glycero-3-phospholipid + H(+). The protein operates within protein modification; lipoprotein biosynthesis (N-acyl transfer). Catalyzes the phospholipid dependent N-acylation of the N-terminal cysteine of apolipoprotein, the last step in lipoprotein maturation. The sequence is that of Apolipoprotein N-acyltransferase 1 from Leptospira interrogans serogroup Icterohaemorrhagiae serovar Lai (strain 56601).